The chain runs to 391 residues: U-box domain-containing protein 57 (391 aa).

One can recognise an MIF4G domain in the interval 1–178; it reads MVKNSYVLFA…DLTERLLQVE (178 aa). A U-box domain is found at 322–391; sequence QPPPSFICPI…LRSAIEELGR (70 aa).

It carries out the reaction S-ubiquitinyl-[E2 ubiquitin-conjugating enzyme]-L-cysteine + [acceptor protein]-L-lysine = [E2 ubiquitin-conjugating enzyme]-L-cysteine + N(6)-ubiquitinyl-[acceptor protein]-L-lysine.. It participates in protein modification; protein ubiquitination. Functionally, functions as an E3 ubiquitin ligase. The chain is U-box domain-containing protein 57 (PUB57) from Arabidopsis thaliana (Mouse-ear cress).